Consider the following 132-residue polypeptide: Small ribosomal subunit protein uS8c (132 aa).

It belongs to the universal ribosomal protein uS8 family. As to quaternary structure, part of the 30S ribosomal subunit.

The protein resides in the plastid. Its subcellular location is the chloroplast. Its function is as follows. One of the primary rRNA binding proteins, it binds directly to 16S rRNA central domain where it helps coordinate assembly of the platform of the 30S subunit. The protein is Small ribosomal subunit protein uS8c (rps8) of Guillardia theta (Cryptophyte).